The sequence spans 154 residues: Protein phosphatase 1 regulatory subunit 27 (154 aa).

2 ANK repeats span residues 63 to 92 (SGLA…DIHQ) and 96 to 125 (TGWT…DRDA).

In terms of assembly, interacts with DYSF and PPP1CA.

Its function is as follows. Inhibits phosphatase activity of protein phosphatase 1 (PP1) complexes. In Mus musculus (Mouse), this protein is Protein phosphatase 1 regulatory subunit 27 (Ppp1r27).